Here is a 264-residue protein sequence, read N- to C-terminus: Thiazole synthase (264 aa).

Catalysis depends on K98, which acts as the Schiff-base intermediate with DXP. 1-deoxy-D-xylulose 5-phosphate is bound by residues G159, 185–186, and 207–208; these read AG and AS.

It belongs to the ThiG family. As to quaternary structure, homotetramer. Forms heterodimers with either ThiH or ThiS.

Its subcellular location is the cytoplasm. It catalyses the reaction [ThiS sulfur-carrier protein]-C-terminal-Gly-aminoethanethioate + 2-iminoacetate + 1-deoxy-D-xylulose 5-phosphate = [ThiS sulfur-carrier protein]-C-terminal Gly-Gly + 2-[(2R,5Z)-2-carboxy-4-methylthiazol-5(2H)-ylidene]ethyl phosphate + 2 H2O + H(+). It functions in the pathway cofactor biosynthesis; thiamine diphosphate biosynthesis. Its function is as follows. Catalyzes the rearrangement of 1-deoxy-D-xylulose 5-phosphate (DXP) to produce the thiazole phosphate moiety of thiamine. Sulfur is provided by the thiocarboxylate moiety of the carrier protein ThiS. In vitro, sulfur can be provided by H(2)S. In Streptomyces griseus subsp. griseus (strain JCM 4626 / CBS 651.72 / NBRC 13350 / KCC S-0626 / ISP 5235), this protein is Thiazole synthase.